The sequence spans 393 residues: S-adenosylmethionine synthase 2 (393 aa).

Glutamate 9 serves as a coordination point for Mg(2+). Residue histidine 15 coordinates ATP. Glutamate 43 contributes to the K(+) binding site. L-methionine is bound by residues glutamate 56 and glutamine 99. Residues 167 to 169, 235 to 238, aspartate 246, 252 to 253, alanine 269, lysine 273, and lysine 277 contribute to the ATP site; these read DGK, SGRF, and RK. Aspartate 246 is a binding site for L-methionine. Lysine 277 is a binding site for L-methionine.

The protein belongs to the AdoMet synthase family. In terms of assembly, homotetramer. The cofactor is Mn(2+). Mg(2+) serves as cofactor. Requires Co(2+) as cofactor. It depends on K(+) as a cofactor. In terms of tissue distribution, roots and shoots.

The protein localises to the cytoplasm. It catalyses the reaction L-methionine + ATP + H2O = S-adenosyl-L-methionine + phosphate + diphosphate. It participates in amino-acid biosynthesis; S-adenosyl-L-methionine biosynthesis; S-adenosyl-L-methionine from L-methionine: step 1/1. In terms of biological role, catalyzes the formation of S-adenosylmethionine from methionine and ATP. The reaction comprises two steps that are both catalyzed by the same enzyme: formation of S-adenosylmethionine (AdoMet) and triphosphate, and subsequent hydrolysis of the triphosphate. The chain is S-adenosylmethionine synthase 2 (SAMS2) from Pinus contorta (Shore pine).